The chain runs to 246 residues: Small ribosomal subunit protein uS2 (246 aa).

It belongs to the universal ribosomal protein uS2 family.

This chain is Small ribosomal subunit protein uS2, found in Chromohalobacter salexigens (strain ATCC BAA-138 / DSM 3043 / CIP 106854 / NCIMB 13768 / 1H11).